The chain runs to 357 residues: Cholinesterase 1 (357 aa).

S112 serves as the catalytic Acyl-ester intermediate. The cysteines at positions 166 and 179 are disulfide-linked. Residues E244 and H357 each act as charge relay system in the active site.

It belongs to the type-B carboxylesterase/lipase family.

The catalysed reaction is an acylcholine + H2O = a carboxylate + choline + H(+). The protein is Cholinesterase 1 (CHE1) of Branchiostoma lanceolatum (Common lancelet).